Here is a 332-residue protein sequence, read N- to C-terminus: Fructose-1,6-bisphosphatase class 1 (332 aa).

Glu89, Asp110, Leu112, and Asp113 together coordinate Mg(2+). Substrate is bound by residues 113–116, Asn206, Tyr239, 257–259, and Lys269; these read DGSS and YLY. Glu275 is a binding site for Mg(2+).

It belongs to the FBPase class 1 family. Homotetramer. Requires Mg(2+) as cofactor.

The protein resides in the cytoplasm. The catalysed reaction is beta-D-fructose 1,6-bisphosphate + H2O = beta-D-fructose 6-phosphate + phosphate. Its pathway is carbohydrate biosynthesis; gluconeogenesis. The protein is Fructose-1,6-bisphosphatase class 1 of Salmonella typhimurium (strain LT2 / SGSC1412 / ATCC 700720).